The primary structure comprises 357 residues: DNA replication and repair protein RecF (357 aa).

30–37 is an ATP binding site; it reads GANGSGKT.

This sequence belongs to the RecF family.

The protein resides in the cytoplasm. Functionally, the RecF protein is involved in DNA metabolism; it is required for DNA replication and normal SOS inducibility. RecF binds preferentially to single-stranded, linear DNA. It also seems to bind ATP. This chain is DNA replication and repair protein RecF, found in Escherichia coli O139:H28 (strain E24377A / ETEC).